The following is a 453-amino-acid chain: CAAX prenyl protease 1 (453 aa).

Topologically, residues 1–12 are lumenal; it reads MFDLKTILDHPN. The chain crosses the membrane as a helical span at residues 13–33; that stretch reads IPWKLIISGFSIAQFSFESYL. Residues 34 to 89 are Cytoplasmic-facing; it reads TYRQYQKLSETKLPPVLEDEIDDETFHKSRNYSRAKAKFSIFGDVYNLAQKLVFIK. The chain crosses the membrane as a helical span at residues 90-110; that stretch reads YDLFPKIWHMAVSLLNAVLPV. Residues 111–121 lie on the Lumenal side of the membrane; it reads RFHMVSTVAQS. Residues 122 to 142 form a helical membrane-spanning segment; it reads LCFLGLLSSLSTLVDLPLSYY. Residues 143-167 are Cytoplasmic-facing; it reads SHFVLEEKFGFNKLTVQLWITDMIK. A helical transmembrane segment spans residues 168–188; sequence SLTLAYAIGGPILYLFLKIFD. The Lumenal portion of the chain corresponds to 189–197; sequence KFPTDFLWY. Residues 198–218 traverse the membrane as a helical segment; the sequence is IMVFLFVVQILAMTIIPVFIM. Over 219-306 the chain is Cytoplasmic; that stretch reads PMFNKFTPLE…HEIGHWQKNH (88 aa). His-297 provides a ligand contact to Zn(2+). Residue Glu-298 is part of the active site. His-301 contributes to the Zn(2+) binding site. The helical transmembrane segment at 307-327 threads the bilayer; it reads IVNMVIFSQLHTFLIFSLFTS. Over 328–357 the chain is Lumenal; the sequence is IYRNTSFYNTFGFFLEKSTGSFVDPVITKE. The chain crosses the membrane as a helical span at residues 358–378; that stretch reads FPIIIGFMLFNDLLTPLECAM. The Cytoplasmic segment spans residues 379–453; sequence QFVMSLISRT…LDYVSEKKKN (75 aa). Residue Glu-390 participates in Zn(2+) binding. Catalysis depends on Asp-394, which acts as the Proton donor.

It belongs to the peptidase M48A family. The cofactor is Zn(2+).

The protein localises to the endoplasmic reticulum membrane. The enzyme catalyses Hydrolyzes the peptide bond -P2-(S-farnesyl or geranylgeranyl)C-P1'-P2'-P3'-COOH where P1' and P2' are amino acids with aliphatic side chains and P3' is any C-terminal residue.. In terms of biological role, proteolytically removes the C-terminal three residues of farnesylated A-factor mating pheromone. Also acts to cleave the N-terminal extension of the pheromone. Does not act on Ras. The protein is CAAX prenyl protease 1 (STE24) of Saccharomyces cerevisiae (strain ATCC 204508 / S288c) (Baker's yeast).